The sequence spans 396 residues: Elongation factor Tu (396 aa).

In terms of domain architecture, tr-type G spans 11 to 205 (KPHVNIGTIG…IVDEYIPTPE (195 aa)). A G1 region spans residues 20 to 27 (GHVDHGKT). 20–27 (GHVDHGKT) contributes to the GTP binding site. Residue Thr-27 participates in Mg(2+) binding. The G2 stretch occupies residues 61-65 (GITIN). The segment at 82 to 85 (DAPG) is G3. GTP is bound by residues 82 to 86 (DAPGH) and 137 to 140 (NKCD). The segment at 137–140 (NKCD) is G4. The segment at 175–177 (SAL) is G5.

It belongs to the TRAFAC class translation factor GTPase superfamily. Classic translation factor GTPase family. EF-Tu/EF-1A subfamily. Monomer.

The protein resides in the cytoplasm. The enzyme catalyses GTP + H2O = GDP + phosphate + H(+). Its function is as follows. GTP hydrolase that promotes the GTP-dependent binding of aminoacyl-tRNA to the A-site of ribosomes during protein biosynthesis. This is Elongation factor Tu from Lactobacillus acidophilus (strain ATCC 700396 / NCK56 / N2 / NCFM).